Reading from the N-terminus, the 251-residue chain is Ubiquinone/menaquinone biosynthesis C-methyltransferase UbiE (251 aa).

Residues T74, D95, 123–124, and S140 contribute to the S-adenosyl-L-methionine site; that span reads NA.

The protein belongs to the class I-like SAM-binding methyltransferase superfamily. MenG/UbiE family.

It carries out the reaction a 2-demethylmenaquinol + S-adenosyl-L-methionine = a menaquinol + S-adenosyl-L-homocysteine + H(+). It catalyses the reaction a 2-methoxy-6-(all-trans-polyprenyl)benzene-1,4-diol + S-adenosyl-L-methionine = a 5-methoxy-2-methyl-3-(all-trans-polyprenyl)benzene-1,4-diol + S-adenosyl-L-homocysteine + H(+). It participates in quinol/quinone metabolism; menaquinone biosynthesis; menaquinol from 1,4-dihydroxy-2-naphthoate: step 2/2. Its pathway is cofactor biosynthesis; ubiquinone biosynthesis. Functionally, methyltransferase required for the conversion of demethylmenaquinol (DMKH2) to menaquinol (MKH2) and the conversion of 2-polyprenyl-6-methoxy-1,4-benzoquinol (DDMQH2) to 2-polyprenyl-3-methyl-6-methoxy-1,4-benzoquinol (DMQH2). The protein is Ubiquinone/menaquinone biosynthesis C-methyltransferase UbiE of Klebsiella pneumoniae subsp. pneumoniae (strain ATCC 700721 / MGH 78578).